The sequence spans 275 residues: Glutamate racemase (275 aa).

Residues 22-23 (DS) and 54-55 (YG) contribute to the substrate site. Cys-85 serves as the catalytic Proton donor/acceptor. Residue 86–87 (NT) participates in substrate binding. Cys-196 serves as the catalytic Proton donor/acceptor. 197–198 (TH) contacts substrate.

This sequence belongs to the aspartate/glutamate racemases family.

It carries out the reaction L-glutamate = D-glutamate. It functions in the pathway cell wall biogenesis; peptidoglycan biosynthesis. Provides the (R)-glutamate required for cell wall biosynthesis. This Pseudomonas syringae pv. tomato (strain ATCC BAA-871 / DC3000) protein is Glutamate racemase.